A 206-amino-acid chain; its full sequence is Large ribosomal subunit protein uL4 (206 aa).

Positions 62–85 are disordered; it reads KPWRQKGTGRARQGSTRSPQFRGG.

The protein belongs to the universal ribosomal protein uL4 family. As to quaternary structure, part of the 50S ribosomal subunit.

One of the primary rRNA binding proteins, this protein initially binds near the 5'-end of the 23S rRNA. It is important during the early stages of 50S assembly. It makes multiple contacts with different domains of the 23S rRNA in the assembled 50S subunit and ribosome. Functionally, forms part of the polypeptide exit tunnel. This Rhodospirillum centenum (strain ATCC 51521 / SW) protein is Large ribosomal subunit protein uL4.